The following is a 265-amino-acid chain: Hydroxyethylthiazole kinase (265 aa).

Met-55 is a binding site for substrate. The ATP site is built by Arg-130 and Ser-176. Residue Gly-203 coordinates substrate.

Belongs to the Thz kinase family. It depends on Mg(2+) as a cofactor.

It carries out the reaction 5-(2-hydroxyethyl)-4-methylthiazole + ATP = 4-methyl-5-(2-phosphooxyethyl)-thiazole + ADP + H(+). It functions in the pathway cofactor biosynthesis; thiamine diphosphate biosynthesis; 4-methyl-5-(2-phosphoethyl)-thiazole from 5-(2-hydroxyethyl)-4-methylthiazole: step 1/1. Its function is as follows. Catalyzes the phosphorylation of the hydroxyl group of 4-methyl-5-beta-hydroxyethylthiazole (THZ). In Leptospira interrogans serogroup Icterohaemorrhagiae serovar Lai (strain 56601), this protein is Hydroxyethylthiazole kinase.